We begin with the raw amino-acid sequence, 248 residues long: Myelin protein P0 (248 aa).

The signal sequence occupies residues 1 to 29 (MAPGAPSSSPSPILAALLFSSLVLSPTLA). Residues 30–143 (IVVYTDREVY…DIVGKTSQVT (114 aa)) form the Ig-like V-type domain. At 30 to 153 (IVVYTDREVY…LYVFEKVPTR (124 aa)) the chain is on the extracellular side. A disulfide bond links cysteine 50 and cysteine 127. Asparagine 122 carries an N-linked (GlcNAc...) (complex) asparagine glycan. Residues 154-179 (YGVVLGAVIGGILGVVLLLLLLFYLI) traverse the membrane as a helical segment. Over 180–248 (RYCWLRRQAA…GLGESRKDKK (69 aa)) the chain is Cytoplasmic. The residue at position 210 (serine 210) is a Phosphoserine; by PKC. The interval 222-248 (MLDHSRSTKAASEKKSKGLGESRKDKK) is disordered. Residues 224–248 (DHSRSTKAASEKKSKGLGESRKDKK) are compositionally biased toward basic and acidic residues. A phosphoserine mark is found at serine 226 and serine 228. Serine 233 is subject to Phosphoserine; by PKC. Serine 237 bears the Phosphoserine mark. Serine 243 carries the phosphoserine; by PKC modification.

It belongs to the myelin P0 protein family. Homodimer and homotetramer. N-glycosylated; contains sulfate-substituted glycan. Found only in peripheral nervous system Schwann cells.

The protein localises to the cell membrane. Functionally, is an adhesion molecule necessary for normal myelination in the peripheral nervous system. It mediates adhesion between adjacent myelin wraps and ultimately drives myelin compaction. This chain is Myelin protein P0 (Mpz), found in Rattus norvegicus (Rat).